The primary structure comprises 514 residues: Cardiolipin synthase 2 (514 aa).

A run of 3 helical transmembrane segments spans residues 7–27 (LIFFILLLFALFVSLRMFIDV), 41–61 (ILGIISILFTVSAFLIGCVIF), and 71–91 (LTWLIVLGIFPVFGFFAYLLF). PLD phosphodiesterase domains lie at 249–276 (INYRNHRKIVVIDGNEGFVGGLNIGDEY) and 427–454 (EKGFLHSKIVIVDSDLASIGTANMDMRS). Catalysis depends on residues H254, K256, D261, H432, K434, and D439.

The protein belongs to the phospholipase D family. Cardiolipin synthase subfamily.

Its subcellular location is the cell membrane. It catalyses the reaction 2 a 1,2-diacyl-sn-glycero-3-phospho-(1'-sn-glycerol) = a cardiolipin + glycerol. In terms of biological role, catalyzes the reversible phosphatidyl group transfer from one phosphatidylglycerol molecule to another to form cardiolipin (CL) (diphosphatidylglycerol) and glycerol. This chain is Cardiolipin synthase 2 (cls2), found in Bacillus cereus (strain ATCC 14579 / DSM 31 / CCUG 7414 / JCM 2152 / NBRC 15305 / NCIMB 9373 / NCTC 2599 / NRRL B-3711).